We begin with the raw amino-acid sequence, 522 residues long: Maturase K (522 aa).

The protein belongs to the intron maturase 2 family. MatK subfamily.

Its subcellular location is the plastid. The protein resides in the chloroplast. In terms of biological role, usually encoded in the trnK tRNA gene intron. Probably assists in splicing its own and other chloroplast group II introns. The protein is Maturase K of Tigridia pavonia (Mexican shell flower).